A 406-amino-acid chain; its full sequence is Phloroisovalerophenone synthase (406 aa).

Cys171 is a catalytic residue.

The protein belongs to the thiolase-like superfamily. Chalcone/stilbene synthases family.

The catalysed reaction is 3-methylbutanoyl-CoA + 3 malonyl-CoA + 3 H(+) = phlorisovalerophenone + 3 CO2 + 4 CoA. Functionally, produces 3-methyl-1-(2,4,6-trihydroxyphenyl)butan-1-one (phloroisovalerophenone). The polypeptide is Phloroisovalerophenone synthase (VPS) (Psilotum nudum (Whisk fern)).